The primary structure comprises 197 residues: Protein-S-isoprenylcysteine O-methyltransferase B (197 aa).

3 consecutive transmembrane segments (helical) span residues 16 to 36 (MFLA…AIHG), 52 to 72 (ALAM…FPGL), and 81 to 101 (FGLT…ITAG). Residues 116-119 (HKLV), Tyr124, and 129-132 (HPSY) each bind S-adenosyl-L-methionine. Residues 140–160 (VGTQVMLCNPISAIAFAVVVW) traverse the membrane as a helical segment. Residue Arg166 coordinates substrate. Glu170 lines the S-adenosyl-L-methionine pocket.

Belongs to the class VI-like SAM-binding methyltransferase superfamily. Isoprenylcysteine carboxyl methyltransferase family. It depends on Zn(2+) as a cofactor. As to expression, expressed in flowers, stems, leaves, roots and siliques. Detected in apices and vascular tissues of leaves and roots, in the stigma and in the filaments and anthers of stamen. Not found in petioles or hypocotyls.

It localises to the endoplasmic reticulum membrane. The catalysed reaction is [protein]-C-terminal S-[(2E,6E)-farnesyl]-L-cysteine + S-adenosyl-L-methionine = [protein]-C-terminal S-[(2E,6E)-farnesyl]-L-cysteine methyl ester + S-adenosyl-L-homocysteine. With respect to regulation, inhibited by farnesylthioacetic acid (FTAA) and N-acetyl-S-trans, trans-farnesyl-l-cysteine (AFC). Its function is as follows. Catalyzes the post-translational methylation of isoprenylated C-terminal cysteine residues, resulting in the modulation of the function of prenylated proteins. Involved in negative regulation of abscisic acid signaling. Carboxyl methylation is a reversible and potentially regulated step in the post-translational modification of prenylated proteins. This Arabidopsis thaliana (Mouse-ear cress) protein is Protein-S-isoprenylcysteine O-methyltransferase B.